The following is a 305-amino-acid chain: Porphobilinogen deaminase (305 aa).

Cysteine 238 carries the S-(dipyrrolylmethanemethyl)cysteine modification.

The protein belongs to the HMBS family. In terms of assembly, monomer. It depends on dipyrromethane as a cofactor.

The enzyme catalyses 4 porphobilinogen + H2O = hydroxymethylbilane + 4 NH4(+). Its pathway is porphyrin-containing compound metabolism; protoporphyrin-IX biosynthesis; coproporphyrinogen-III from 5-aminolevulinate: step 2/4. Tetrapolymerization of the monopyrrole PBG into the hydroxymethylbilane pre-uroporphyrinogen in several discrete steps. The protein is Porphobilinogen deaminase of Rubrobacter xylanophilus (strain DSM 9941 / JCM 11954 / NBRC 16129 / PRD-1).